We begin with the raw amino-acid sequence, 383 residues long: Mannitol-1-phosphate 5-dehydrogenase (383 aa).

A3–G14 is an NAD(+) binding site.

Belongs to the mannitol dehydrogenase family.

The catalysed reaction is D-mannitol 1-phosphate + NAD(+) = beta-D-fructose 6-phosphate + NADH + H(+). This is Mannitol-1-phosphate 5-dehydrogenase from Serratia proteamaculans (strain 568).